Here is a 157-residue protein sequence, read N- to C-terminus: N-acetylgalactosamine-specific phosphotransferase enzyme IIB component 2 (157 aa).

Residues 1 to 157 form the PTS EIIB type-4 domain; that stretch reads MPNIVLSRID…EPAVDLFKLL (157 aa). His-15 functions as the Pros-phosphohistidine intermediate in the catalytic mechanism.

The protein localises to the cytoplasm. In terms of biological role, the phosphoenolpyruvate-dependent sugar phosphotransferase system (sugar PTS), a major carbohydrate active -transport system, catalyzes the phosphorylation of incoming sugar substrates concomitantly with their translocation across the cell membrane. This system is involved in N-acetylgalactosamine transport. The sequence is that of N-acetylgalactosamine-specific phosphotransferase enzyme IIB component 2 (agaV) from Escherichia coli (strain K12).